Consider the following 562-residue polypeptide: Matrix metalloproteinase-25 (562 aa).

Positions 1–21 are cleaved as a signal peptide; sequence MRLRLRLLALLLLLLAPPARA. Positions 22 to 107 are excised as a propeptide; sequence PKPSAQDVSL…VAGLVRRRRR (86 aa). Residues 88–95 carry the Cysteine switch motif; the sequence is PRCSLPDV. Zn(2+)-binding residues include C90 and H233. E234 is an active-site residue. Zn(2+) is bound by residues H237 and H243. A disordered region spans residues 278 to 313; the sequence is LYGKAPQTPYDKPTRKPLAPPPQPPASPTHSPSFPI. Pro residues predominate over residues 295 to 304; the sequence is LAPPPQPPAS. Hemopexin repeat units follow at residues 314-363, 367-412, 413-461, and 462-508; these read PDRC…WEGL, VRVV…GLPP, GEEV…EGAP, and PSPD…WLDC. A disulfide bond links C317 and C508. The tract at residues 490–526 is disordered; that stretch reads SIKTEPDAPQPMGPNWLDCPAPSSGPRAPRPPKATPV. Residue A539 is the site of GPI-anchor amidated alanine attachment. Positions 540–562 are cleaved as a propeptide — removed in mature form; the sequence is AGRWPAPIPLLLLPLLVGGVASR.

The protein belongs to the peptidase M10A family. The cofactor is Zn(2+). Requires Ca(2+) as cofactor. Post-translationally, the precursor is cleaved by a furin endopeptidase. Expressed predominantly in leukocytes, lung and spleen. Expressed also in colon carcinoma, astrocytoma and glioblastomas.

Its subcellular location is the cell membrane. It localises to the secreted. The protein localises to the extracellular space. The protein resides in the extracellular matrix. Functionally, may activate progelatinase A. The polypeptide is Matrix metalloproteinase-25 (MMP25) (Homo sapiens (Human)).